Consider the following 439-residue polypeptide: Serine/threonine-protein kinase 2 (439 aa).

Residues 87-439 (NDDFYHISTG…IFSDWINGGN (353 aa)) enclose the Protein kinase domain. ATP-binding positions include 93 to 101 (ISTGGYGIV) and Lys-117. Asp-307 serves as the catalytic Proton acceptor.

It belongs to the protein kinase superfamily. Ser/Thr protein kinase family. Poxviruses subfamily. Phosphorylated in vivo. Autophosphorylated in vitro.

The protein localises to the host endoplasmic reticulum. It is found in the host endoplasmic reticulum-Golgi intermediate compartment. The catalysed reaction is L-seryl-[protein] + ATP = O-phospho-L-seryl-[protein] + ADP + H(+). It carries out the reaction L-threonyl-[protein] + ATP = O-phospho-L-threonyl-[protein] + ADP + H(+). Essential serine-protein kinase involved in the early stage of virion morphogenesis. The sequence is that of Serine/threonine-protein kinase 2 (OPG054) from Vaccinia virus (strain Copenhagen) (VACV).